Here is a 419-residue protein sequence, read N- to C-terminus: Putative nucleobase-ascorbate transporter 9 (419 aa).

Positions 1–22 (MANGAGNGGGGAGGNGGGGNNG) are enriched in gly residues. The disordered stretch occupies residues 1 to 28 (MANGAGNGGGGAGGNGGGGNNGAGNRAE). Helical transmembrane passes span 64–84 (LLSL…MGGG), 91–111 (VIQT…FFGT), 113–133 (LPVI…IIYS), 153–173 (IQGA…LGVW), 184–204 (SIAP…FPLV), 220–240 (GMML…SSGV), 273–293 (SFAM…LFYA), 313–333 (RVIQ…KFGA), 334–354 (FFAS…LCFV), and 370–390 (FNTK…PQYF).

The protein belongs to the nucleobase:cation symporter-2 (NCS2) (TC 2.A.40) family.

The protein resides in the membrane. This Arabidopsis thaliana (Mouse-ear cress) protein is Putative nucleobase-ascorbate transporter 9 (NAT9).